Here is a 284-residue protein sequence, read N- to C-terminus: NAD kinase (284 aa).

The Proton acceptor role is filled by Asp70. Residues 70–71, 139–140, Lys167, Asp169, Leu177, 180–185, and Gln236 each bind NAD(+); these read DG, NE, and TAYNLS.

The protein belongs to the NAD kinase family. A divalent metal cation serves as cofactor.

Its subcellular location is the cytoplasm. It catalyses the reaction NAD(+) + ATP = ADP + NADP(+) + H(+). Involved in the regulation of the intracellular balance of NAD and NADP, and is a key enzyme in the biosynthesis of NADP. Catalyzes specifically the phosphorylation on 2'-hydroxyl of the adenosine moiety of NAD to yield NADP. The chain is NAD kinase from Helicobacter pylori (strain P12).